The chain runs to 555 residues: Urocanate hydratase (555 aa).

NAD(+) is bound by residues 52 to 53, glutamine 130, 176 to 178, glutamate 196, arginine 201, 242 to 243, 263 to 267, 272 to 273, and tyrosine 321; these read GG, GMG, NA, QTSAH, and YL. Cysteine 409 is a catalytic residue. Glycine 491 contributes to the NAD(+) binding site.

The protein belongs to the urocanase family. The cofactor is NAD(+).

It localises to the cytoplasm. It carries out the reaction 4-imidazolone-5-propanoate = trans-urocanate + H2O. Its pathway is amino-acid degradation; L-histidine degradation into L-glutamate; N-formimidoyl-L-glutamate from L-histidine: step 2/3. Catalyzes the conversion of urocanate to 4-imidazolone-5-propionate. This is Urocanate hydratase from Nocardioides sp. (strain ATCC BAA-499 / JS614).